The sequence spans 42 residues: Photosystem I reaction center subunit IX (42 aa).

A helical membrane pass occupies residues 7-27; it reads YLSVAPVLSTLWFGALAGLLI.

The protein belongs to the PsaJ family.

Its subcellular location is the plastid. It is found in the chloroplast thylakoid membrane. In terms of biological role, may help in the organization of the PsaE and PsaF subunits. The chain is Photosystem I reaction center subunit IX from Agrostis stolonifera (Creeping bentgrass).